We begin with the raw amino-acid sequence, 170 residues long: dCTP pyrophosphatase 1 (170 aa).

Residues 1 to 27 are disordered; it reads MSVAGGEIRGDTGGEDTAAPGRFSFSP. Ser-2 carries the N-acetylserine modification. Residue Ser-2 is modified to Phosphoserine. The residue at position 12 (Thr-12) is a Phosphothreonine. Substrate is bound by residues His-38 and 47-51; that span reads WEQFH. Residues Glu-63 and Glu-66 each coordinate Mg(2+). Position 73 (Trp-73) interacts with substrate. Position 85 is a phosphoserine (Ser-85). Mg(2+)-binding residues include Glu-95 and Asp-98. Tyr-102 contributes to the substrate binding site. Residues 147-170 form a disordered region; that stretch reads GAISEDQAVGPADIPCDSTGQTST.

Homotetramer. Mg(2+) is required as a cofactor.

It localises to the mitochondrion. Its subcellular location is the nucleus. The protein resides in the cytoplasm. The protein localises to the cytosol. The enzyme catalyses dCTP + H2O = dCMP + diphosphate + H(+). Inhibited by the reaction end product PPi. Inhibited by dCDP. Inhibited by triptolide. Hydrolyzes deoxynucleoside triphosphates (dNTPs) to the corresponding nucleoside monophosphates. Has a strong preference for dCTP and its analogs including 5-iodo-dCTP and 5-methyl-dCTP for which it may even have a higher efficiency. May protect DNA or RNA against the incorporation of these genotoxic nucleotide analogs through their catabolism. This Homo sapiens (Human) protein is dCTP pyrophosphatase 1.